The sequence spans 172 residues: Small ribosomal subunit protein uS5 (172 aa).

The S5 DRBM domain maps to 15–78 (LNDKLIFINR…ANAKRNLSRI (64 aa)).

Belongs to the universal ribosomal protein uS5 family. In terms of assembly, part of the 30S ribosomal subunit. Contacts proteins S4 and S8.

Functionally, with S4 and S12 plays an important role in translational accuracy. Located at the back of the 30S subunit body where it stabilizes the conformation of the head with respect to the body. This chain is Small ribosomal subunit protein uS5, found in Dehalococcoides mccartyi (strain CBDB1).